We begin with the raw amino-acid sequence, 469 residues long: UDP-N-acetylmuramate--L-alanine ligase (469 aa).

Residue 112–118 (GTHGKTT) participates in ATP binding.

It belongs to the MurCDEF family.

It is found in the cytoplasm. The enzyme catalyses UDP-N-acetyl-alpha-D-muramate + L-alanine + ATP = UDP-N-acetyl-alpha-D-muramoyl-L-alanine + ADP + phosphate + H(+). It participates in cell wall biogenesis; peptidoglycan biosynthesis. In terms of biological role, cell wall formation. This chain is UDP-N-acetylmuramate--L-alanine ligase, found in Laribacter hongkongensis (strain HLHK9).